A 364-amino-acid chain; its full sequence is Paraneoplastic antigen Ma2 (364 aa).

At Ala-2 the chain carries N-acetylalanine. Positions 335-351 are enriched in acidic residues; that stretch reads EEEEASFENESIEEPEE. Residues 335–364 are disordered; the sequence is EEEEASFENESIEEPEERDGYGRWNHEGDD. The span at 352-364 shows a compositional bias: basic and acidic residues; the sequence is RDGYGRWNHEGDD.

This sequence belongs to the PNMA family. In terms of tissue distribution, brain-specific. In some cancer patients, specifically expressed by testicular tumor cells.

Its subcellular location is the nucleus. The protein localises to the nucleolus. The sequence is that of Paraneoplastic antigen Ma2 (PNMA2) from Homo sapiens (Human).